Here is a 416-residue protein sequence, read N- to C-terminus: Nucleoside transporter 1 (416 aa).

The segment covering 1 to 26 (MSISKESSKTMIDIEKKGGEGKDGKG) has biased composition (basic and acidic residues). The disordered stretch occupies residues 1-28 (MSISKESSKTMIDIEKKGGEGKDGKGGS). Residues 1–35 (MSISKESSKTMIDIEKKGGEGKDGKGGSKMTKNEQ) lie on the Cytoplasmic side of the membrane. A helical transmembrane segment spans residues 36–58 (FLLPFTFILIGLSSLNVWNTALG). At 59-64 (LNINFK) the chain is on the extracellular side. A helical transmembrane segment spans residues 65-83 (YNTFQITGLVCSSIIALFV). The Cytoplasmic segment spans residues 84 to 87 (KVPK). A helical membrane pass occupies residues 88–107 (MLLPFALGGLAMLCAGFQIA). Topologically, residues 108-119 (HQCFTFEQFDTY) are extracellular. Residues 120-139 (CLIAFIVIGIMAGLAQTIAF) form a helical membrane-spanning segment. The Cytoplasmic segment spans residues 140–148 (SVGTTMEEN). Residues 149–171 (MGGYMSAGIGISGVFIFIINLLL) form a helical membrane-spanning segment. Residues 172 to 187 (DQIVPDQKKFNVNEAK) are Extracellular-facing. The helical transmembrane segment at 188 to 210 (LLYLFLICELCLVLAIIFSVCNL) threads the bilayer. Topologically, residues 211–241 (ELSSSKTSKEEEYSDKEQGLSYLELLKDSYK) are cytoplasmic. The helical transmembrane segment at 242–261 (AILAMFLVNWLSLQLFPGVG) threads the bilayer. Residues 262 to 273 (HKKWQESHNISD) are Extracellular-facing. The chain crosses the membrane as a helical span at residues 274-292 (YNVTLIVGMFQVFDFVSRY). Residues 293-311 (PPNLSHMKIFKWFTFSLNK) lie on the Cytoplasmic side of the membrane. Residues 312 to 331 (LLLLNFLRLLFIPWFVINAA) traverse the membrane as a helical segment. At 332 to 343 (CDLPIFTNIVQQ) the chain is on the extracellular side. Residues 344-366 (CVCMAMLAFTNGWFNTVPFLVFV) form a helical membrane-spanning segment. At 367–380 (QELKKAKKKKDIET) the chain is on the cytoplasmic side. The chain crosses the membrane as a helical span at residues 381–403 (ISTFLVVAMFVGLFMGIWTTYIY). At 404–416 (DFFPIVIKRYVVP) the chain is on the extracellular side.

The protein belongs to the SLC29A/ENT transporter (TC 2.A.57) family.

It localises to the cell membrane. The catalysed reaction is inosine(in) = inosine(out). It carries out the reaction adenosine(in) = adenosine(out). It catalyses the reaction hypoxanthine(out) = hypoxanthine(in). The enzyme catalyses guanosine(in) = guanosine(out). The catalysed reaction is guanine(out) = guanine(in). It carries out the reaction thymidine(in) = thymidine(out). It catalyses the reaction uridine(out) = uridine(in). The enzyme catalyses uracil(in) = uracil(out). The catalysed reaction is thymine(out) = thymine(in). It carries out the reaction adenine(out) = adenine(in). It catalyses the reaction cytosine(out) = cytosine(in). The enzyme catalyses xanthine(out) = xanthine(in). Nucleoside and nucleobase transporter with a broad substrate specificity. This is Nucleoside transporter 1 from Plasmodium vivax (strain Salvador I).